The sequence spans 390 residues: Olfactomedin-like protein 3A (390 aa).

A signal peptide spans 1–17 (MRALQLLVLVLSGLVGA). Residues 18–91 (QQQALMDYLE…RVDRVEREMD (74 aa)) are a coiled coil. Residues 130-386 (DCSDMISSIK…QILYKLQLKK (257 aa)) form the Olfactomedin-like domain. Cys131 and Cys313 are oxidised to a cystine. Asn169 carries an N-linked (GlcNAc...) asparagine glycan.

Belongs to the OLFML3 family.

The protein resides in the secreted. Functionally, secreted scaffold protein that plays an essential role in dorsoventral patterning during early development. Stabilizes axial formation by restricting chordin (CHRD) activity on the dorsal side. Acts by facilitating the association between the tolloid proteases and their substrate chordin (CHRD), leading to enhance chordin (CHRD) degradation. The protein is Olfactomedin-like protein 3A (olfml3a) of Danio rerio (Zebrafish).